The primary structure comprises 475 residues: MTAKPPFKVIIVGGSIAGLTLAHCLSKAGIDYIVLEKRKHIAPQEGASIGILPHGGRILEQLGLFYLVEEQIEPLHTAHQYFPDGFAHTTKAPQVIYERFGLPLAFLERRRMLRALYDTLPDSSQVLVNKAVTSVEREVSDLMRVTTYDGSVYRGNLVVGADGVHSRVRAEMWRLATSQSPGVFPEHEMSAMAVEYACIFGISSSVPKLQPGEQVASFNNGRSYLTFPGKNGRVFWFLLLKLDRKYSYSNAPRFSSTDAEKRAERFADDHIWAGVNFRDLWKSKEVFSFVNLEEYLFQQWHWERIVCIGDSMHKMTPNTGQGANCAIEDAAALVNRLHRALKATPDGSSLSSGDIDDLLGEFNRARSRRVREIYQGSRMVVRLQARQNLFLKLLGRYYLPYRGEVAADAASKIIAPAEHLDFLPLATRSATGWHQFKPGQSKTLLIPFLYPVVAFSLCVLAWIGNDYLRNGVVFA.

The signal sequence occupies residues 1–24 (MTAKPPFKVIIVGGSIAGLTLAHC). 5 residues coordinate FAD: glutamate 36, glycine 50, arginine 109, aspartate 310, and alanine 323. A helical transmembrane segment spans residues 444 to 464 (LLIPFLYPVVAFSLCVLAWIG).

The protein belongs to the paxM FAD-dependent monooxygenase family. The cofactor is FAD.

It is found in the membrane. It carries out the reaction (2E,6E,10E)-geranylgeranyl-triacetate lactone + AH2 + O2 = (S)-(2E,6E,10E)-epoxygeranylgeranyl-triacetate lactone + A + H2O. Its pathway is secondary metabolite biosynthesis; terpenoid biosynthesis. Functionally, FAD-dependent monooxygenase spyC; part of the gene cluster that mediates the biosynthesis of meroterpenoids called sartorypyrones. Within the pathway, spyC catalyzes the epoxidation of geranylgeranyl-triacetate lactone at the terminal olein to yield epoxygeranylgeranyl-triacetate lactone. The biosynthesis of sartorypyrones begins with the production of triacetic acid lactone (TAL) by the NR-PKS spyA using one molecule of acetyl-CoA and two molecules of malonyl-CoA. The prenyltransferase spyF then conjugates geranylgeranyl pyrophosphate (GGPP) to TAL to form geranylgeranyl-triacetate lactone, for which the pathway-specific geranylgeranyl pyrophosphate synthase (GGPS) spyE is required to provide GGPP. Subsequently, geranylgeranyl-triacetate lactone is epoxidized at the terminal olein by the FAD-dependent monooxygenase spyC, followed by cyclization of the terpenoid component catalyzed by the terpene cyclase spyD to produce both the bicyclic sartorypyrone F and the monocyclic sartorypyrone D. Finally, the last step of the biosynthesis involves the acetylation of the meroterpenoids sartorypyrones D and F by the acetyltransferase SpyB to produce sartorypyrones A and G, respectively. The chain is FAD-dependent monooxygenase spyC from Aspergillus fumigatus (strain ATCC MYA-4609 / CBS 101355 / FGSC A1100 / Af293) (Neosartorya fumigata).